A 59-amino-acid chain; its full sequence is Potassium channel toxin alpha-KTx 1.1 (59 aa).

The signal sequence occupies residues 1 to 22 (MKILSVLLLALIICSIVGWSEA). Position 23 is a pyrrolidone carboxylic acid (glutamine 23). 3 disulfides stabilise this stretch: cysteine 29-cysteine 50, cysteine 35-cysteine 55, and cysteine 39-cysteine 57. Positions 48–55 (GKCMNKKC) are interaction with Ca(2+)-activated K(+) channels.

Belongs to the short scorpion toxin superfamily. Potassium channel inhibitor family. Alpha-KTx 01 subfamily. In terms of tissue distribution, expressed by the venom gland.

It localises to the secreted. Its function is as follows. This toxin inhibits numerous potassium channels: shaker (Ki=227 nM), Kv1.2/KCNA2 (nanomolar range), Kv1.3/KCNA3 (nanomolar range), Kv1.5/KCNA5 (Kd&gt;100 nM), Kv1.6/KCNA6 (Ki=22 nM), KCa1.1/KCNMA1 (IC(50)=5.9 nM). It blocks channel activity by a simple bimolecular inhibition process. It also shows a weak interaction with nicotinic acetylcholine receptors (nAChR), suggesting it may weakly inhibit it. It also exhibits pH-specific antimicrobial activities against bacteria (B.subtilis, E.coli and S.aureus) and the fungus C.albicans. This Leiurus hebraeus (Hebrew deathstalker scorpion) protein is Potassium channel toxin alpha-KTx 1.1.